Reading from the N-terminus, the 299-residue chain is Ig alpha chain C region (299 aa).

2 consecutive Ig-like domains span residues 71-167 (PSLS…ATIS) and 174-276 (PQVH…KTID).

Ig alpha is the major immunoglobulin class in body secretions. It may serve both to defend against local infection and to prevent access of foreign antigens to the general immunologic system. This is Ig alpha chain C region from Oryctolagus cuniculus (Rabbit).